The chain runs to 389 residues: Phosphatidylglycerol--prolipoprotein diacylglyceryl transferase (389 aa).

The next 4 helical transmembrane spans lie at 28–48, 58–78, 98–118, and 148–168; these read IIVA…LIYF, FFIF…YFLI, LAIQ…FNVF, and ISVF…QAIG. Arg-169 contributes to the a 1,2-diacyl-sn-glycero-3-phospho-(1'-sn-glycerol) binding site. 3 consecutive transmembrane segments (helical) span residues 220–240, 281–301, and 309–329; these read IPLF…IYFV, IVFS…CQTL, and FWTY…TTLF.

Belongs to the Lgt family.

It localises to the cell membrane. The enzyme catalyses L-cysteinyl-[prolipoprotein] + a 1,2-diacyl-sn-glycero-3-phospho-(1'-sn-glycerol) = an S-1,2-diacyl-sn-glyceryl-L-cysteinyl-[prolipoprotein] + sn-glycerol 1-phosphate + H(+). The protein operates within protein modification; lipoprotein biosynthesis (diacylglyceryl transfer). In terms of biological role, catalyzes the transfer of the diacylglyceryl group from phosphatidylglycerol to the sulfhydryl group of the N-terminal cysteine of a prolipoprotein, the first step in the formation of mature lipoproteins. This is Phosphatidylglycerol--prolipoprotein diacylglyceryl transferase from Mycoplasma pneumoniae (strain ATCC 29342 / M129 / Subtype 1) (Mycoplasmoides pneumoniae).